A 63-amino-acid chain; its full sequence is LLLISAMVGSMIAAVPEEESLQLSEDERGGCLPHNRFCNALSGPRCCSGLTCKELNIWASKCL.

An N-terminal signal peptide occupies residues 1-14; that stretch reads LLLISAMVGSMIAA. A propeptide spanning residues 15 to 28 is cleaved from the precursor; that stretch reads VPEEESLQLSEDER. 3 disulfide bridges follow: Cys-31/Cys-47, Cys-38/Cys-52, and Cys-46/Cys-62.

This sequence belongs to the neurotoxin 01 (U2-agtx) family. In terms of tissue distribution, expressed by the venom gland.

It localises to the secreted. Its function is as follows. Insect active toxin causing rapid but reversible paralysis in crickets. No activity shown in mammals. Does not show effect on mammalian voltage-gated calcium channels. The sequence is that of U2-agatoxin-Ao1v from Agelena orientalis (Funnel-web spider).